The sequence spans 303 residues: Mitochondrial basic amino acids transporter (303 aa).

Helical transmembrane passes span 2–22, 61–81, 96–116, 153–172, 187–207, and 255–275; these read ALDF…GHPF, GLGS…GVQG, FLAG…MELA, GMVS…FLTY, LLVP…WLST, and LLRA…VLTY. 3 Solcar repeats span residues 2–86, 90–178, and 185–275; these read ALDF…TLRA, DSPL…LTRA, and DRLL…VLTY. A disordered region spans residues 282–303; sequence GPEGEAVPAAPAGPALAQPSSL. The segment covering 284 to 303 has biased composition (low complexity); sequence EGEAVPAAPAGPALAQPSSL.

It belongs to the mitochondrial carrier (TC 2.A.29) family.

It is found in the mitochondrion inner membrane. The catalysed reaction is L-lysine(out) + L-arginine(in) = L-lysine(in) + L-arginine(out). The enzyme catalyses L-histidine(out) + L-arginine(in) = L-histidine(in) + L-arginine(out). It carries out the reaction L-ornithine(in) + L-arginine(out) = L-ornithine(out) + L-arginine(in). It catalyses the reaction L-homoarginine(in) + L-arginine(out) = L-homoarginine(out) + L-arginine(in). The catalysed reaction is N(omega)-methyl-L-arginine(in) + L-arginine(out) = N(omega)-methyl-L-arginine(out) + L-arginine(in). The enzyme catalyses L-arginine(in) = L-arginine(out). It carries out the reaction L-lysine(in) = L-lysine(out). It catalyses the reaction L-ornithine(in) = L-ornithine(out). The catalysed reaction is L-histidine(out) = L-histidine(in). Mitochondrial transporter of arginine, lysine, homoarginine, methylarginine and, to a much lesser extent, ornithine and histidine. Does not transport carnitine nor acylcarnitines. Functions by both counter-exchange and uniport mechanisms. Plays a physiological role in the import of basic amino acids into mitochondria for mitochondrial protein synthesis and amino acid degradation. The polypeptide is Mitochondrial basic amino acids transporter (Homo sapiens (Human)).